The following is a 1843-amino-acid chain: Zinc finger protein 142 (1843 aa).

2 C2H2-type zinc fingers span residues 103-127 (YFCE…TETH) and 164-186 (LPCP…FKIH). Residues 294–357 (PAAKLPPGHR…LEGHVGSGTE (64 aa)) are disordered. The segment covering 318–329 (SAEEEDAEEEES) has biased composition (acidic residues). Over residues 330 to 340 (VTQKDSQKVMD) the composition is skewed to basic and acidic residues. Serine 354 is subject to Phosphoserine. The segment at 363–385 (HMCPECKRCFKKRTHLVEHLHLH) adopts a C2H2-type 3 zinc-finger fold. Residues 391–413 (LQCPNCQKFFTSKSKLKTHLLRE) form a C2H2-type 4; degenerate zinc finger. 7 C2H2-type zinc fingers span residues 453–475 (YACP…LKSH), 543–566 (FHCP…KQGH), 601–623 (HQCS…MLLH), 629–651 (HKCE…MLTH), 657–679 (YMCT…MRKH), 685–707 (YQCN…KLRH), and 744–767 (YPCR…NCKH). Lysine 794 participates in a covalent cross-link: Glycyl lysine isopeptide (Lys-Gly) (interchain with G-Cter in SUMO2). Disordered stretches follow at residues 819–888 (QCLA…LGEV) and 1103–1177 (PKPV…TGTS). The segment covering 837–846 (PEREDREHEI) has biased composition (basic and acidic residues). The span at 1157–1167 (LPTPSDFPTSP) shows a compositional bias: pro residues. Residues 1168-1177 (PENSLPTGTS) are compositionally biased toward polar residues. C2H2-type zinc fingers lie at residues 1331–1354 (LQCG…RLKH), 1388–1411 (IPCS…LRVH), 1446–1469 (FSCT…LRRH), 1514–1537 (LECG…RQHH), 1608–1630 (YKCT…SRIH), 1636–1658 (YHCH…MRIH), 1664–1686 (YLCP…MTKH), 1692–1715 (YQCP…ETRH), and 1721–1743 (FMCE…LRKH). Glycyl lysine isopeptide (Lys-Gly) (interchain with G-Cter in SUMO2) cross-links involve residues lysine 1353 and lysine 1402. Residue lysine 1747 forms a Glycyl lysine isopeptide (Lys-Gly) (interchain with G-Cter in SUMO2) linkage. Residues 1749 to 1771 (YVCNVCHRAFRWAAGLRHHALTH) form a C2H2-type 21 zinc finger. Residues 1795 to 1843 (HVRRHHPDQADPNQGVGKDPTTPTVHLHDVKLEDPSPPAPPAPSTGPEG) are disordered. Over residues 1829–1843 (PSPPAPPAPSTGPEG) the composition is skewed to pro residues.

This sequence belongs to the krueppel C2H2-type zinc-finger protein family.

It localises to the nucleus. May be involved in transcriptional regulation. The polypeptide is Zinc finger protein 142 (Mus musculus (Mouse)).